The chain runs to 503 residues: Excitatory amino acid transporter (503 aa).

Over 1–18 the chain is Cytoplasmic; sequence MPPDTRINKEIMVSWIRK. 3 consecutive transmembrane segments (helical) span residues 19-39, 59-79, and 96-116; these read NLLL…GFLL, LMHM…ISGL, and TYYM…VLVI. Residues 117 to 198 are Extracellular-facing; it reads HPGDPTIKKE…SLDYVKASVE (82 aa). Asn-177 and Asn-187 each carry an N-linked (GlcNAc...) asparagine glycan. A run of 5 helical transmembrane segments spans residues 199–219, 239–259, 281–301, 369–389, and 400–420; these read YTSG…GISL, VIMK…FCLI, VTVL…IFFV, AVAA…GQVV, and IGAA…LTAV.

Belongs to the dicarboxylate/amino acid:cation symporter (DAACS) (TC 2.A.23) family.

Its subcellular location is the membrane. Transports L-glutamate and also L- and D-aspartate. Essential for terminating the postsynaptic action of glutamate by rapidly removing released glutamate from the synaptic cleft. Acts as a symport by cotransporting sodium. The sequence is that of Excitatory amino acid transporter (glt-1) from Caenorhabditis elegans.